A 549-amino-acid polypeptide reads, in one-letter code: Glucose-6-phosphate isomerase (549 aa).

The active-site Proton donor is glutamate 354. Catalysis depends on residues histidine 385 and lysine 513.

It belongs to the GPI family.

The protein localises to the cytoplasm. It carries out the reaction alpha-D-glucose 6-phosphate = beta-D-fructose 6-phosphate. It functions in the pathway carbohydrate biosynthesis; gluconeogenesis. The protein operates within carbohydrate degradation; glycolysis; D-glyceraldehyde 3-phosphate and glycerone phosphate from D-glucose: step 2/4. In terms of biological role, catalyzes the reversible isomerization of glucose-6-phosphate to fructose-6-phosphate. The protein is Glucose-6-phosphate isomerase of Nitrosococcus oceani (strain ATCC 19707 / BCRC 17464 / JCM 30415 / NCIMB 11848 / C-107).